A 639-amino-acid chain; its full sequence is Altered inheritance of mitochondria protein 9, mitochondrial (639 aa).

A mitochondrion-targeting transit peptide spans 1 to 45; that stretch reads MLMSKAPKLGNLLSKNSIKIVSGSKLRCNLKYINVRYISDTPDKV. A disordered region spans residues 619–639; it reads VSSEAQSEVQSEVQSSTENKD.

It belongs to the AIM9 family.

The protein localises to the mitochondrion. The protein is Altered inheritance of mitochondria protein 9, mitochondrial (AIM9) of Vanderwaltozyma polyspora (strain ATCC 22028 / DSM 70294 / BCRC 21397 / CBS 2163 / NBRC 10782 / NRRL Y-8283 / UCD 57-17) (Kluyveromyces polysporus).